A 261-amino-acid chain; its full sequence is Type III pantothenate kinase (261 aa).

Position 6–13 (6–13 (DAGNSNIT)) interacts with ATP. Substrate contacts are provided by residues Y100 and 107-110 (GADR). D109 acts as the Proton acceptor in catalysis. D129 contacts K(+). T132 contributes to the ATP binding site. T184 serves as a coordination point for substrate.

It belongs to the type III pantothenate kinase family. Homodimer. It depends on NH4(+) as a cofactor. K(+) is required as a cofactor.

The protein resides in the cytoplasm. It carries out the reaction (R)-pantothenate + ATP = (R)-4'-phosphopantothenate + ADP + H(+). It participates in cofactor biosynthesis; coenzyme A biosynthesis; CoA from (R)-pantothenate: step 1/5. Functionally, catalyzes the phosphorylation of pantothenate (Pan), the first step in CoA biosynthesis. The polypeptide is Type III pantothenate kinase (Solibacter usitatus (strain Ellin6076)).